The primary structure comprises 383 residues: MAAALRPSNRVLLQALQTLVYPGVGGSGSVSCRCPVGAKRYLLTDNVVKLKEFQQKKVAIACNLSGTKEMYFRNLKEKLTQNKLILKGELITLLHLCESRDHVELAKNVIYRYHAENKNFTLGEYKFGPLFMRLCYELNLEESAVELVKDQHLRGFFSDSTSFNILMDMLFIKGKYKSALEVLIEMKNQNVKFTTDTYVLAFAICYKLNSPESFKICTILGEKALLKGEILSRRASCFAVALALNQNEVAKAMSIFSQIMNPESIACVNLNIIIHIQSNMLENLIKTLNNAAEGNLSKFVKRNVFSEEVLAKVREKVKDVPALVAKFDEIYGILHITGQVTTDSLDAVLCHTPKDRKSHMLLLNKRMFSRRTSQPLSQSLLAE.

The stretch at 161 to 195 is one PPR repeat; it reads TSFNILMDMLFIKGKYKSALEVLIEMKNQNVKFTT. Residue Ser377 is modified to Phosphoserine.

Belongs to the PTCD2 family.

It localises to the mitochondrion. Its function is as follows. Involved in mitochondrial RNA maturation and mitochondrial respiratory chain function. This is Pentatricopeptide repeat-containing protein 2, mitochondrial (PTCD2) from Pongo abelii (Sumatran orangutan).